We begin with the raw amino-acid sequence, 589 residues long: Transmembrane 9 superfamily member 3 (589 aa).

A signal peptide spans 1–28 (MRPLPGALGVAAAAALWLLLLLLPRTRA). An N-linked (GlcNAc...) asparagine glycan is attached at Asn-174. Transmembrane regions (helical) follow at residues 224–244 (FSIF…SMIL), 294–314 (LIGS…VAMI), 328–348 (AIFV…SLYA), 360–380 (FIGA…INFI), and 389–409 (AIPF…ILPL). The N-linked (GlcNAc...) asparagine glycan is linked to Asn-419. The next 4 membrane-spanning stretches (helical) occupy residues 449 to 469 (IVCL…YFIF), 482 to 502 (GFMM…TIVC), 519 to 539 (FLSA…YYFF), and 551 to 571 (FYFG…GAIG).

It belongs to the nonaspanin (TM9SF) (TC 9.A.2) family.

It localises to the membrane. This chain is Transmembrane 9 superfamily member 3 (TM9SF3), found in Homo sapiens (Human).